Here is a 288-residue protein sequence, read N- to C-terminus: Energy-coupling factor transporter ATP-binding protein EcfA2 (288 aa).

The 244-residue stretch at 3–246 folds into the ABC transporter domain; the sequence is IKLEQLGYCY…PDELVDLGLS (244 aa). ATP is bound at residue 40-47; it reads GHTGSGKS.

Belongs to the ABC transporter superfamily. Energy-coupling factor EcfA family. As to quaternary structure, forms a stable energy-coupling factor (ECF) transporter complex composed of 2 membrane-embedded substrate-binding proteins (S component), 2 ATP-binding proteins (A component) and 2 transmembrane proteins (T component).

It is found in the cell membrane. In terms of biological role, ATP-binding (A) component of a common energy-coupling factor (ECF) ABC-transporter complex. Unlike classic ABC transporters this ECF transporter provides the energy necessary to transport a number of different substrates. The polypeptide is Energy-coupling factor transporter ATP-binding protein EcfA2 (Listeria monocytogenes serovar 1/2a (strain ATCC BAA-679 / EGD-e)).